Here is a 78-residue protein sequence, read N- to C-terminus: MYLGIVSTACAFLLWNHGLQLLNASSGGLFFFFQPLVGTLLGWILLGEQIGGTFWIGSFLILSGVLLVIKEKEKEVKS.

3 helical membrane passes run 2 to 22 (YLGI…LQLL), 27 to 47 (GGLF…ILLG), and 49 to 69 (QIGG…LLVI). An EamA domain is found at 2–70 (YLGIVSTACA…ILSGVLLVIK (69 aa)).

This sequence belongs to the EamA transporter family.

It is found in the cell membrane. This is Putative permease-like protein YdzE (ydzE) from Bacillus subtilis (strain 168).